Here is a 218-residue protein sequence, read N- to C-terminus: GTP cyclohydrolase 1 (218 aa).

The Zn(2+) site is built by C109, H112, and C180.

The protein belongs to the GTP cyclohydrolase I family. As to quaternary structure, toroid-shaped homodecamer, composed of two pentamers of five dimers.

It catalyses the reaction GTP + H2O = 7,8-dihydroneopterin 3'-triphosphate + formate + H(+). The protein operates within cofactor biosynthesis; 7,8-dihydroneopterin triphosphate biosynthesis; 7,8-dihydroneopterin triphosphate from GTP: step 1/1. The polypeptide is GTP cyclohydrolase 1 (Aeromonas salmonicida (strain A449)).